We begin with the raw amino-acid sequence, 238 residues long: MATLGVNIDHIANVRQARKTVEPDPVQFAFLAELGGADSITVHLREDRRHIQDRDVFLLKETIKTKLNLEMAATKEMLEIAKKILPDYVTLVPEKREEVTTEGGLDLKSNVQYLKKAVGSLKDSNIEVSAFIDPLSEQINYSKEIGFDFIELHTGKYAELSGSNQHKELQRIIESTHIANDLGLVVNAGHGLNYNNVRKIASINNMNELNIGHSIVARALAIGLEKSVREMKSLITLN.

Residue N7 coordinates 3-amino-2-oxopropyl phosphate. Residue 9 to 10 (DH) coordinates 1-deoxy-D-xylulose 5-phosphate. R18 contributes to the 3-amino-2-oxopropyl phosphate binding site. The active-site Proton acceptor is the H43. The 1-deoxy-D-xylulose 5-phosphate site is built by R45 and H50. The active-site Proton acceptor is E70. T100 provides a ligand contact to 1-deoxy-D-xylulose 5-phosphate. H190 (proton donor) is an active-site residue. Residues G191 and 212-213 (GH) each bind 3-amino-2-oxopropyl phosphate.

The protein belongs to the PNP synthase family. As to quaternary structure, homooctamer; tetramer of dimers.

It is found in the cytoplasm. The catalysed reaction is 3-amino-2-oxopropyl phosphate + 1-deoxy-D-xylulose 5-phosphate = pyridoxine 5'-phosphate + phosphate + 2 H2O + H(+). It functions in the pathway cofactor biosynthesis; pyridoxine 5'-phosphate biosynthesis; pyridoxine 5'-phosphate from D-erythrose 4-phosphate: step 5/5. In terms of biological role, catalyzes the complicated ring closure reaction between the two acyclic compounds 1-deoxy-D-xylulose-5-phosphate (DXP) and 3-amino-2-oxopropyl phosphate (1-amino-acetone-3-phosphate or AAP) to form pyridoxine 5'-phosphate (PNP) and inorganic phosphate. This Prochlorococcus marinus (strain AS9601) protein is Pyridoxine 5'-phosphate synthase.